Here is a 358-residue protein sequence, read N- to C-terminus: 3-isopropylmalate dehydrogenase 2 (358 aa).

74–87 (GPKWDKLPAESRPE) provides a ligand contact to NAD(+). Substrate is bound by residues Arg94, Arg104, Arg132, and Asp221. The Mg(2+) site is built by Asp221, Asp245, and Asp249. Residue 279–291 (GSAPDIAGQGVAN) coordinates NAD(+).

It belongs to the isocitrate and isopropylmalate dehydrogenases family. LeuB type 1 subfamily. In terms of assembly, homodimer. It depends on Mg(2+) as a cofactor. Requires Mn(2+) as cofactor.

Its subcellular location is the cytoplasm. It carries out the reaction (2R,3S)-3-isopropylmalate + NAD(+) = 4-methyl-2-oxopentanoate + CO2 + NADH. Its pathway is amino-acid biosynthesis; L-leucine biosynthesis; L-leucine from 3-methyl-2-oxobutanoate: step 3/4. Functionally, catalyzes the oxidation of 3-carboxy-2-hydroxy-4-methylpentanoate (3-isopropylmalate) to 3-carboxy-4-methyl-2-oxopentanoate. The product decarboxylates to 4-methyl-2 oxopentanoate. The chain is 3-isopropylmalate dehydrogenase 2 from Dechloromonas aromatica (strain RCB).